The sequence spans 149 residues: Phosphoribosyl-AMP cyclohydrolase (149 aa).

Asp-92 contributes to the Mg(2+) binding site. Zn(2+) is bound at residue Cys-93. Residues Asp-94 and Asp-96 each coordinate Mg(2+). Cys-111 and Cys-118 together coordinate Zn(2+).

This sequence belongs to the PRA-CH family. As to quaternary structure, homodimer. Requires Mg(2+) as cofactor. The cofactor is Zn(2+).

It localises to the cytoplasm. The enzyme catalyses 1-(5-phospho-beta-D-ribosyl)-5'-AMP + H2O = 1-(5-phospho-beta-D-ribosyl)-5-[(5-phospho-beta-D-ribosylamino)methylideneamino]imidazole-4-carboxamide. The protein operates within amino-acid biosynthesis; L-histidine biosynthesis; L-histidine from 5-phospho-alpha-D-ribose 1-diphosphate: step 3/9. In terms of biological role, catalyzes the hydrolysis of the adenine ring of phosphoribosyl-AMP. This Rhizobium rhizogenes (strain K84 / ATCC BAA-868) (Agrobacterium radiobacter) protein is Phosphoribosyl-AMP cyclohydrolase.